The primary structure comprises 119 residues: Single-stranded DNA-binding protein (119 aa).

The region spanning isoleucine 3–glycine 102 is the SSB domain.

In terms of assembly, homotetramer.

The chain is Single-stranded DNA-binding protein (ssb1) from Anabaena variabilis.